A 266-amino-acid polypeptide reads, in one-letter code: Undecaprenyl-diphosphatase (266 aa).

A run of 8 helical transmembrane segments spans residues 1–21, 39–59, 87–107, 115–135, 144–164, 183–203, 218–238, and 246–266; these read MDTFQVIILALIQGLTEFLPI, QGLSFDVAVNTGSLLAVVMYF, WWIILATIPAVIVGFTAKDFI, AVIATTTIVFGLLLWWADRMF, VGWKKALVIGVAQAMALIPGT, AAARFSFLMSVPVSLGAAILV, ALSLGIIVSFVAAYTCIHLFL, and MTPFVIYRLALGAILCAFMFA.

This sequence belongs to the UppP family.

The protein localises to the cell inner membrane. The enzyme catalyses di-trans,octa-cis-undecaprenyl diphosphate + H2O = di-trans,octa-cis-undecaprenyl phosphate + phosphate + H(+). In terms of biological role, catalyzes the dephosphorylation of undecaprenyl diphosphate (UPP). Confers resistance to bacitracin. This chain is Undecaprenyl-diphosphatase, found in Shewanella sediminis (strain HAW-EB3).